We begin with the raw amino-acid sequence, 327 residues long: Gamma-resorcylate decarboxylase (327 aa).

E8 and H10 together coordinate Zn(2+). 3 residues coordinate 2,6-dihydroxybenzoate: F23, H164, and D287. Residues H164 and D287 each contribute to the Zn(2+) site. Residue D287 is part of the active site.

Belongs to the metallo-dependent hydrolases superfamily. ACMSD family. In terms of assembly, homotetramer. Dimer of dimers. Requires Zn(2+) as cofactor.

It catalyses the reaction 2,6-dihydroxybenzoate + H(+) = resorcinol + CO2. The enzyme catalyses 2,3-dihydroxybenzoate + H(+) = catechol + CO2. Its pathway is aromatic compound metabolism. Inhibited by CuCl(2), monoiodoacetate and diethylpyrocarbonate. Inhibited by 2,3-dihydroxybenzaldehyde, which is an analog of the substrate 2,3-dihydroxybenzoate. In terms of biological role, involved in the gamma-resorcylate (2,6-dihydroxybenzoate) catabolism. Catalyzes the reversible decarboxylation of gamma-resorcylate to resorcinol. The reaction is reversible, but equilibrium greatly favors the decarboxylation reaction. Also catalyzes the decarboxylation of 2,3-dihydroxybenzoate to catechol, but does not act on 2,4-dihydroxybenzoate, 2,5-dihydroxybenzoate, 3,4-dihydroxybenzoate, 3,5-dihydroxybenzoate, 2-hydroxybenzoate, or 3-hydroxybenzoate. Only resorcinol is carboxylated by the reverse reaction. This Rhizobium sp. (strain MTP-10005) protein is Gamma-resorcylate decarboxylase.